Here is a 234-residue protein sequence, read N- to C-terminus: LexA repressor (234 aa).

Residues F26–S46 constitute a DNA-binding region (H-T-H motif). The disordered stretch occupies residues A73–K100. Low complexity predominate over residues A91–K100. Catalysis depends on for autocatalytic cleavage activity residues S154 and K192.

The protein belongs to the peptidase S24 family. Homodimer.

It carries out the reaction Hydrolysis of Ala-|-Gly bond in repressor LexA.. Represses a number of genes involved in the response to DNA damage (SOS response), including recA and lexA. In the presence of single-stranded DNA, RecA interacts with LexA causing an autocatalytic cleavage which disrupts the DNA-binding part of LexA, leading to derepression of the SOS regulon and eventually DNA repair. The chain is LexA repressor from Novosphingobium aromaticivorans (strain ATCC 700278 / DSM 12444 / CCUG 56034 / CIP 105152 / NBRC 16084 / F199).